The following is a 60-amino-acid chain: Large ribosomal subunit protein uL30 (60 aa).

Belongs to the universal ribosomal protein uL30 family. Part of the 50S ribosomal subunit.

The chain is Large ribosomal subunit protein uL30 from Streptococcus suis (strain 98HAH33).